We begin with the raw amino-acid sequence, 300 residues long: 33 kDa chaperonin (300 aa).

2 cysteine pairs are disulfide-bonded: cysteine 247/cysteine 249 and cysteine 280/cysteine 283.

This sequence belongs to the HSP33 family. Under oxidizing conditions two disulfide bonds are formed involving the reactive cysteines. Under reducing conditions zinc is bound to the reactive cysteines and the protein is inactive.

Its subcellular location is the cytoplasm. Redox regulated molecular chaperone. Protects both thermally unfolding and oxidatively damaged proteins from irreversible aggregation. Plays an important role in the bacterial defense system toward oxidative stress. In Prochlorococcus marinus subsp. pastoris (strain CCMP1986 / NIES-2087 / MED4), this protein is 33 kDa chaperonin.